Here is a 413-residue protein sequence, read N- to C-terminus: RNA-binding protein 41 (413 aa).

The disordered stretch occupies residues 225-247 (SGSGTAEKPSLLQDKGKQAAQGK). In terms of domain architecture, RRM spans 309–387 (KVLYLKNLSP…KILVIEFAKS (79 aa)).

Functionally, may bind RNA. The chain is RNA-binding protein 41 (Rbm41) from Mus musculus (Mouse).